Consider the following 303-residue polypeptide: MSVIGRFLYYLRSVLVVLALAGCGFYGVIASILCTLIGKQHLAQWITARCFYHVMKLMLGLDVKVVGEENLAKKPYIMIANHQSTLDIFMLGRIFPPGCTVTAKKSLKYVPFLGWFMALSGTYFLDRSKRQEAIDTLNKGLENVKKNKRALWVFPEGTRSYTSELTMLPFKKGAFHLAQQGKIPIVPVVVSNTSTLVSPKYGVFNRGCMIVRILKPISTENLTKDKIGEFAEKVRDQMVDTLKEIGYSPAINDTTLPPQAIEYAALQHDKKVNKKIKNEPVPSVSISNDVNTHNEGSSVKKMH.

Residues 82–87 carry the HXXXXD motif motif; sequence HQSTLD. Positions 278–303 are disordered; it reads NEPVPSVSISNDVNTHNEGSSVKKMH. The span at 284–297 shows a compositional bias: polar residues; the sequence is VSISNDVNTHNEGS.

Belongs to the 1-acyl-sn-glycerol-3-phosphate acyltransferase family.

The protein localises to the lipid droplet. The catalysed reaction is a 1-acyl-sn-glycero-3-phosphate + an acyl-CoA = a 1,2-diacyl-sn-glycero-3-phosphate + CoA. It carries out the reaction a 1-acyl-sn-glycero-3-phosphocholine + an acyl-CoA = a 1,2-diacyl-sn-glycero-3-phosphocholine + CoA. It catalyses the reaction a 1-acyl-sn-glycero-3-phosphoethanolamine + an acyl-CoA = a 1,2-diacyl-sn-glycero-3-phosphoethanolamine + CoA. The enzyme catalyses 1-hexadecanoyl-sn-glycero-3-phosphate + (9Z)-octadecenoyl-CoA = 1-hexadecanoyl-2-(9Z-octadecenoyl)-sn-glycero-3-phosphate + CoA. The catalysed reaction is 1-octadecanoyl-sn-glycero-3-phosphate + (9Z)-octadecenoyl-CoA = 1-octadecanoyl-2-(9Z-octadecenoyl)-sn-glycero-3-phosphate + CoA. It carries out the reaction 1-(9Z-octadecenoyl)-sn-glycero-3-phospho-L-serine + (9Z)-octadecenoyl-CoA = 1,2-di-(9Z)-octadecenoyl-sn-glycero-3-phospho-L-serine + CoA. It catalyses the reaction a 1-acyl-sn-glycero-3-phospho-(1D-myo-inositol) + (9Z)-octadecenoyl-CoA = a 1-acyl-2-(9Z-octadecenoyl)-sn-glycero-3-phospho-(1D-myo-inositol) + CoA. The enzyme catalyses 1-heptadecanoyl-sn-glycero-3-phosphate + (9Z)-octadecenoyl-CoA = 1-heptadecanoyl-2-(9Z)-octadecenoyl-sn-glycero-3-phosphate + CoA. The catalysed reaction is 1-heptadecanoyl-sn-glycero-3-phosphate + dodecanoyl-CoA = 1-heptadecanoyl-2-dodecanoyl-sn-glycero-3-phosphate + CoA. It carries out the reaction 1-heptadecanoyl-sn-glycero-3-phosphate + tetradecanoyl-CoA = 1-heptadecanoyl-2-tetradecanoyl-sn-glycero-3-phosphate + CoA. Its pathway is phospholipid metabolism; CDP-diacylglycerol biosynthesis; CDP-diacylglycerol from sn-glycerol 3-phosphate: step 2/3. Functionally, acyltransferase that catalyzes the sn-2-specific, acyl-CoA-dependent acylation of lysophosphatidic acid (LPA) to phosphatidic acid (PA) in lipid particles. Together with ALE1, plays a central role in PA biosynthesis. PA is the intermediate, from which all glycerophospholipids are synthesized. Can also acylate lysophosphoinositol (LPI) and lysophosphoserine (LPS). The fatty acyl substrates include 18:1-acyl-CoA, 14:0-acyl-CoA, 12:0-acyl-CoA and 10:0-acyl-CoA. In Saccharomyces cerevisiae (strain ATCC 204508 / S288c) (Baker's yeast), this protein is 1-acyl-sn-glycerol-3-phosphate acyltransferase.